A 1207-amino-acid polypeptide reads, in one-letter code: Plasma membrane calcium-transporting ATPase 4 (1207 aa).

Topologically, residues 1 to 100 (MTNPTEHTLP…KTFLELVWEA (100 aa)) are cytoplasmic. Position 13 is a phosphoserine (serine 13). A helical transmembrane segment spans residues 101–121 (LQDVTLIILEIAAIISLVLSF). The Extracellular segment spans residues 122 to 147 (YRPPGGENEQCGLAVTSPEDEGEAEA). The chain crosses the membrane as a helical span at residues 148-168 (GWIEGAAILFSVIIVVLVTAF). The Cytoplasmic portion of the chain corresponds to 169–368 (NDWSKEKQFR…LAVQIGKAGL (200 aa)). The disordered stretch occupies residues 294-317 (EEEKKKKGKKQGVPENRNKAKTQD). Phosphoserine is present on residues serine 328 and serine 334. A helical transmembrane segment spans residues 369 to 389 (IMSAITVLILILYFVIDNFVI). The Extracellular portion of the chain corresponds to 390–408 (QRRPWLAECTPIYVQYFVK). A helical transmembrane segment spans residues 409-429 (FFIIGVTVLVVAVPEGLPLAV). The Cytoplasmic segment spans residues 430-843 (TISLAYSVKK…RNVYDSISKF (414 aa)). Catalysis depends on aspartate 465, which acts as the 4-aspartylphosphate intermediate. Residues aspartate 785 and aspartate 789 each contribute to the Mg(2+) site. A helical membrane pass occupies residues 844-864 (LQFQLTVNVVAVIVAFTGACI). The Extracellular portion of the chain corresponds to 865-871 (TQDSPLK). Residues 872–892 (AVQMLWVNLIMDTFASLALAT) traverse the membrane as a helical segment. The Cytoplasmic segment spans residues 893–918 (EPPTDSLLKRRPYGRNKPLISRTMMK). A helical transmembrane segment spans residues 919–939 (NILGHAVYQLTVIFFLVFAGE). The Extracellular segment spans residues 940–957 (KFFDIDSGRRAPLHSPPS). Residues 958-977 (QHYTIIFNTFVLMQLFNEIN) traverse the membrane as a helical segment. Topologically, residues 978–994 (SRKIHGERNVFSGIFRN) are cytoplasmic. The helical transmembrane segment at 995–1015 (LIFCSVVLGTFISQIIIVEFG) threads the bilayer. Residues 1016–1028 (GKPFSCTKLTLSQ) are Extracellular-facing. A helical membrane pass occupies residues 1029–1049 (WFWCLFIGIGELLWGQVISTI). The Cytoplasmic segment spans residues 1050-1207 (PTQSLKFLKE…SPLHSLETSV (158 aa)). The tract at residues 1086–1103 (LRRGQILWFRGLNRIQTQ) is calmodulin-binding subdomain A. Residue threonine 1102 is modified to Phosphothreonine; by PKC. The calmodulin-binding subdomain B stretch occupies residues 1104–1113 (IKVVKAFHSS). Positions 1159–1181 (VSKPGTKTSSLDGEVTPQTNKNN) are disordered. The span at 1163–1181 (GTKTSSLDGEVTPQTNKNN) shows a compositional bias: polar residues.

The protein belongs to the cation transport ATPase (P-type) (TC 3.A.3) family. Type IIB subfamily. In terms of assembly, interacts with PDZD11. Interacts with SLC35G1 and STIM1. Interacts with calmodulin. Isoform 1 is detected in brain, heart, liver, testis and epididymis. Isoform 2 is detected in brain (at protein level), heart, seminal vesicle and epididymis. There is a shift in expression from isoform 1 to isoform 2 along the length of the epididymis from caput to cauda (at protein level).

Its subcellular location is the cell membrane. The protein localises to the cell projection. It localises to the cilium. It is found in the flagellum membrane. It carries out the reaction Ca(2+)(in) + ATP + H2O = Ca(2+)(out) + ADP + phosphate + H(+). Its activity is regulated as follows. Activated by calcium/calmodulin. Functionally, calcium/calmodulin-regulated and magnesium-dependent enzyme that catalyzes the hydrolysis of ATP coupled with the transport of calcium out of the cell. By regulating sperm cells calcium homeostasis, may play a role in sperm motility. In Bos taurus (Bovine), this protein is Plasma membrane calcium-transporting ATPase 4.